Here is a 233-residue protein sequence, read N- to C-terminus: Octanoyltransferase (233 aa).

A BPL/LPL catalytic domain is found at 34-214 (GQAPSTVLLL…EFSAREATLI (181 aa)). Substrate-binding positions include 72-79 (RGGKLTWH), 144-146 (AIG), and 157-159 (GFS). Residue Cys-175 is the Acyl-thioester intermediate of the active site.

It belongs to the LipB family.

Its subcellular location is the cytoplasm. The enzyme catalyses octanoyl-[ACP] + L-lysyl-[protein] = N(6)-octanoyl-L-lysyl-[protein] + holo-[ACP] + H(+). It participates in protein modification; protein lipoylation via endogenous pathway; protein N(6)-(lipoyl)lysine from octanoyl-[acyl-carrier-protein]: step 1/2. Its function is as follows. Catalyzes the transfer of endogenously produced octanoic acid from octanoyl-acyl-carrier-protein onto the lipoyl domains of lipoate-dependent enzymes. Lipoyl-ACP can also act as a substrate although octanoyl-ACP is likely to be the physiological substrate. The polypeptide is Octanoyltransferase (Renibacterium salmoninarum (strain ATCC 33209 / DSM 20767 / JCM 11484 / NBRC 15589 / NCIMB 2235)).